We begin with the raw amino-acid sequence, 151 residues long: Small ribosomal subunit protein uS15 (151 aa).

Belongs to the universal ribosomal protein uS15 family.

This Pisum sativum (Garden pea) protein is Small ribosomal subunit protein uS15 (RPS13).